Reading from the N-terminus, the 1557-residue chain is MEPTINPPVNLPPPVPSRSNLSLNYSNNNTNNTNNTNNTNDFKKKLQFQLQSSPSSPSSPSPSIIYKKTPAVNNNNNNNNNNNHINNGNVNGIGPGGGNSYISSPQSSPIHTSSNGISYTVTTNSPPLLPVDNSSGYNNNLNSTFVETLSSSSPSPIKTTTTPPPPVPSKSKSKSSEKLSVKLLKSNSKPSLNDLYQQQQQQSNPNSPTTPPSNCNIESIQPPSSSSSSTTPSTSPQLPAIYSKYSKISLPQLPLPPFLPPSPLVQSTSSPSFSSLILPLPSSPLPPPPLTIPNKVPPLPMRLPPPPPPQQLDQMYSNNNQQQQQQQQQQQNNESNSTTTSEGGLTPESESKLYEIASQPPSTPRLTHESKVIPSEIELLIKFYPSPSLSSGSLLTIPSTIEKSFIFSPCSTVDEILSIIIPNFQFHNGLKCFAKHTFNNEWEATHNDPAAASSSIIDDHESFALFNQKSPTIPLHKEKTILELSLHDRDVLILKTVSLVFTLVKVQIPHFTENSLSATATVKFNQFTSIRSIIRKLYLKYHNNVDISRHGIFLINDNNNNNNNNNNNNNNNNNNNNNNNNNNNNNNNNNNNNNNNNNNNNNNNNNNNNNLHQQQDELSSSIQLEEEELFSTYNINSNSNLVFRTISNQENDILNSSQKILNLKILISSTFSRNNTLNLMFDPRDSVSKAIKVTGLRTGLLDSLNKCGFYLTPSEDDDEGFWMDEELTLEMYNLKNHTFLSFKERCKKYTILIKMGGASNGNGNGDLTWRKCTFKFDQFTKVSTLFNILINNENIKNPKDYHLVVKSTGTSLEKHRYLWSYDIKSPYEIEFKEYPNKLLIFNPQNGEKNFVYVDFNEPIKDVCARLSQTFSSPIDFGSISTNNNNNNNNNNNINSNSNGSSGAGGANSNALTSSTNSASTTSSSTPTTPELPPQVNHVRERSYTFKRLGQLNNTIDSRKSLKDQGVLPNDALMLEVIQDDSIATNNNNNNNNNNSNTTTTIKDKKINRNSLPSSTTMVFEDLVKDGTILSEERQINIWDEPADSNGNIIYSKTVTNNLNAEIDAATLNKLIIRLTNPVFHDLTFMKTFLMTYSSYTTTTTLLKKLFERFQVPTHIDERERLSAQLRVANVIKYWVEHHYEDFCHESTKLMVDFVDTHMMIAFPTLGVQIRNCILKRTCGFKSELVRTRSNGALTSPRTNLSLSFTNLNNSSVGSIANTSSSTSTSSTSSLLSSTNSISISSSLSLSFNSGINSPSISQNTPSSPSLIPSSPRPITSSSSVSSSTLLKSPLSQQAKSRIPETKTKGFANPRNLFDFDDEEIARQLTLYDFQLYTAIKPTEFLNQAWNKPSMASRKSPTILKIISRFNDISLWVVSLILEPDRVKTRAKRLKRIISIADELRKLNNYNTCIAVISGINNSAILRLKYTRGLLSKKYLDILENLEKEMSCEGSYKNYRDKLKNSDPPVVPYIGVYLTDLTFIEEGNPNIIRGNLINFAKYYLIYRVISEIQQYQWTEYQLNVAPIIQTFIRDVSISSTSDDLYHLSLLKEPRNALKSDIF.

The segment covering 1-16 (MEPTINPPVNLPPPVP) has biased composition (pro residues). 6 disordered regions span residues 1-121 (MEPT…SYTV), 146-181 (VETLSSSSPSPIKTTTTPPPPVPSKSKSKSSEKLSV), 195-238 (LYQQ…SPQL), 283-347 (SPLP…GLTP), 558-619 (NNNN…DELS), and 881-937 (TNNN…QVNH). Composition is skewed to low complexity over residues 17–40 (SRSNLSLNYSNNNTNNTNNTNNTN), 52–63 (SSPSSPSSPSPS), 73–90 (NNNNNNNNNNNHINNGNV), 102–114 (ISSPQSSPIHTSS), 148–161 (TLSSSSPSPIKTTT), 195–207 (LYQQQQQQSNPNS), and 222–236 (PPSSSSSSTTPSTSP). Residues 283–310 (SPLPPPPLTIPNKVPPLPMRLPPPPPPQ) are compositionally biased toward pro residues. Coiled coils occupy residues 310 to 338 (QQLDQMYSNNNQQQQQQQQQQQNNESNST) and 591 to 629 (NNNNNNNNNNNNNNNNNNNNLHQQQDELSSSIQLEEEEL). Positions 311 to 333 (QLDQMYSNNNQQQQQQQQQQQNN) are enriched in low complexity. Residues 334-343 (ESNSTTTSEG) show a composition bias toward polar residues. Composition is skewed to low complexity over residues 558 to 610 (NNNN…NNNN) and 881 to 928 (TNNN…TPTT). The region spanning 1058 to 1177 (LNAEIDAATL…QIRNCILKRT (120 aa)) is the N-terminal Ras-GEF domain. The interval 1254-1303 (PSISQNTPSSPSLIPSSPRPITSSSSVSSSTLLKSPLSQQAKSRIPETKT) is disordered. The span at 1261-1291 (PSSPSLIPSSPRPITSSSSVSSSTLLKSPLS) shows a compositional bias: low complexity. One can recognise a Ras-GEF domain in the interval 1316 to 1549 (DDEEIARQLT…YHLSLLKEPR (234 aa)).

Functionally, promotes the exchange of Ras-bound GDP by GTP. The sequence is that of Ras guanine nucleotide exchange factor K (gefK) from Dictyostelium discoideum (Social amoeba).